The following is a 241-amino-acid chain: Kynurenine formamidase (241 aa).

The HGGXW signature appears at 23-27 (HGGAW). The active-site Nucleophile is the serine 95. Catalysis depends on residues aspartate 191 and histidine 223.

This sequence belongs to the kynurenine formamidase family. In terms of assembly, homodimer.

The enzyme catalyses N-formyl-L-kynurenine + H2O = L-kynurenine + formate + H(+). Its pathway is amino-acid degradation; L-tryptophan degradation via kynurenine pathway; L-kynurenine from L-tryptophan: step 2/2. Catalyzes the hydrolysis of N-formyl-L-kynurenine to L-kynurenine, the second step in the kynurenine pathway of tryptophan degradation. Kynurenine may be further oxidized to nicotinic acid, NAD(H) and NADP(H). Required for elimination of toxic metabolites. This Eremothecium gossypii (strain ATCC 10895 / CBS 109.51 / FGSC 9923 / NRRL Y-1056) (Yeast) protein is Kynurenine formamidase.